A 184-amino-acid chain; its full sequence is Photosystem I assembly protein Ycf4 (184 aa).

The next 2 helical transmembrane spans lie at 19 to 39 and 64 to 84; these read ISNF…VLVG and LVMS…WCTI.

This sequence belongs to the Ycf4 family.

It is found in the plastid. Its subcellular location is the chloroplast thylakoid membrane. Seems to be required for the assembly of the photosystem I complex. The protein is Photosystem I assembly protein Ycf4 of Oenothera elata subsp. hookeri (Hooker's evening primrose).